A 214-amino-acid polypeptide reads, in one-letter code: Pyridoxine/pyridoxamine 5'-phosphate oxidase (214 aa).

Residues 8 to 11 and Lys-66 each bind substrate; that span reads RTNY. Residues 61 to 66, 76 to 77, Arg-82, Lys-83, and Gln-105 contribute to the FMN site; these read RIVLIK and FT. Substrate-binding residues include Tyr-123, Arg-127, and Ser-131. Residues 140–141 and Trp-184 each bind FMN; that span reads QS. Residue 190–192 coordinates substrate; sequence RLH. Arg-194 lines the FMN pocket.

This sequence belongs to the pyridoxamine 5'-phosphate oxidase family. In terms of assembly, homodimer. Requires FMN as cofactor.

It catalyses the reaction pyridoxamine 5'-phosphate + O2 + H2O = pyridoxal 5'-phosphate + H2O2 + NH4(+). It carries out the reaction pyridoxine 5'-phosphate + O2 = pyridoxal 5'-phosphate + H2O2. It participates in cofactor metabolism; pyridoxal 5'-phosphate salvage; pyridoxal 5'-phosphate from pyridoxamine 5'-phosphate: step 1/1. It functions in the pathway cofactor metabolism; pyridoxal 5'-phosphate salvage; pyridoxal 5'-phosphate from pyridoxine 5'-phosphate: step 1/1. Its function is as follows. Catalyzes the oxidation of either pyridoxine 5'-phosphate (PNP) or pyridoxamine 5'-phosphate (PMP) into pyridoxal 5'-phosphate (PLP). In Burkholderia thailandensis (strain ATCC 700388 / DSM 13276 / CCUG 48851 / CIP 106301 / E264), this protein is Pyridoxine/pyridoxamine 5'-phosphate oxidase.